The sequence spans 61 residues: Sec-independent protein translocase protein TatA (61 aa).

A helical membrane pass occupies residues 2–22; that stretch reads GLSGISPLSLLLILAIIVALF.

The protein belongs to the TatA/E family. As to quaternary structure, the Tat system comprises two distinct complexes: a TatABC complex, containing multiple copies of TatA, TatB and TatC subunits, and a separate TatA complex, containing only TatA subunits. Substrates initially bind to the TatABC complex, which probably triggers association of the separate TatA complex to form the active translocon.

The protein resides in the cell inner membrane. Its function is as follows. Part of the twin-arginine translocation (Tat) system that transports large folded proteins containing a characteristic twin-arginine motif in their signal peptide across membranes. TatA could form the protein-conducting channel of the Tat system. In Legionella pneumophila (strain Paris), this protein is Sec-independent protein translocase protein TatA.